A 501-amino-acid chain; its full sequence is Probable cytosol aminopeptidase (501 aa).

The Mn(2+) site is built by lysine 257 and aspartate 262. Lysine 269 is an active-site residue. Residues aspartate 281, aspartate 341, and glutamate 343 each contribute to the Mn(2+) site. Arginine 345 is an active-site residue.

The protein belongs to the peptidase M17 family. Requires Mn(2+) as cofactor.

It is found in the cytoplasm. The catalysed reaction is Release of an N-terminal amino acid, Xaa-|-Yaa-, in which Xaa is preferably Leu, but may be other amino acids including Pro although not Arg or Lys, and Yaa may be Pro. Amino acid amides and methyl esters are also readily hydrolyzed, but rates on arylamides are exceedingly low.. It catalyses the reaction Release of an N-terminal amino acid, preferentially leucine, but not glutamic or aspartic acids.. Functionally, presumably involved in the processing and regular turnover of intracellular proteins. Catalyzes the removal of unsubstituted N-terminal amino acids from various peptides. The protein is Probable cytosol aminopeptidase of Synechococcus sp. (strain RCC307).